The sequence spans 1007 residues: MDDPLKPKPVPLAAETVLWFEFLLDPHKITQHLQRPHPEPSAMELIVQFISMTPNTAQESVGTPGSDLQNLNQTPSNSGPIPGVVGGAPAPTTPTASGGVGMPHSPQRPAEKGLQLNRKQLALKILELKVATWLKWDLDALEKNLPVIMQLALLRDLCTISYGCSLSIPLPNDFDARISAAGNERAARFALTIYHRMLLRMQLIKEQALKAPRPQNTMYQTVDQLQQFLDTPTQPSIEYLQQLCASTKPFYIFHYDSFVPLRCDDIGNGQNYDVMHLITPQELRAQLHYELAQYYLYTKQYVLAREAAAACNTNLQAIPPQTTLYYCHIRPSELEGLLQACGISAEEQSLLEKFQQSLLNNYTDIVSILRMDNRRREIPFISRRQVELDIEGSISTGILKETVQLQLQVAALNVVRNIFEWGSIFGSVEYFEKYRELDCLPPLVEALQEMLPHCTFKEQAALKHFLIDCLLHQGGQSRQLLQTVRGFGLFSSDELQDIDEQMLQATPPVPTNSLASLSDWMCHSKMSRVDVGALERQLISCTNANTVRILLVKLCATAPGKPLWAINPSWDVPQPLKTLIMAMPVSFLQDFSYVLLGKARELATRGNYIDAVSMLSVLKSENQRQEMAANVQLMCKLITWEILHIQITQCLEEWHQKPLDLQSLGGRCKQCLGALQAGDSIVPRPDILESCAIMLLNLTEFPPLLYLDKRAGPLELPLAFAATFIEMEKMKGPKKVCRDAWELMLSMFLNVPKRGSSGVGGISSLQAFLQRIRHQSVFGLAISMIGKVHNILKDDPNHDLSCEYMQLWPTSINNPVSYSLRSVCETLQWLLSEALSYYPQTISWLKMKGDLDLAIGNNESAMRCYVNALVTGTDYCTMPLQRNVADDYVIRKMIRCAANLGCHMQATVLCQFLDEIDYGIVFKNLSEKSSNFTDAMDAYYSCIWDTTLLEFIVNLHAKRGEHSRKLEAISMMGTLELNANNNEEIKRESAMVRKSRFLRALAKQYLL.

Residues 19 to 24 (WFEFLL) carry the WFEF motif motif. The segment covering 56 to 78 (TAQESVGTPGSDLQNLNQTPSNS) has biased composition (polar residues). Residues 56–112 (TAQESVGTPGSDLQNLNQTPSNSGPIPGVVGGAPAPTTPTASGGVGMPHSPQRPAEK) are disordered. The segment covering 79 to 97 (GPIPGVVGGAPAPTTPTAS) has biased composition (low complexity).

This sequence belongs to the Integrator subunit 8 family. Belongs to the multiprotein complex Integrator, at least composed of IntS1, IntS2, IntS3, IntS4, omd/IntS5, IntS6, defl/IntS7, IntS8, IntS9, IntS10, IntS11, IntS12, asun/IntS13, IntS14 and IntS15. The core complex associates with protein phosphatase 2A subunits mts/PP2A and Pp2A-29B, to form the Integrator-PP2A (INTAC) complex.

It is found in the nucleus. The protein localises to the chromosome. Component of the integrator complex, a multiprotein complex that terminates RNA polymerase II (Pol II) transcription in the promoter-proximal region of genes. The integrator complex provides a quality checkpoint during transcription elongation by driving premature transcription termination of transcripts that are unfavorably configured for transcriptional elongation: the complex terminates transcription by (1) catalyzing dephosphorylation of the C-terminal domain (CTD) of Pol II subunit Polr2A/Rbp1 and Spt5, and (2) degrading the exiting nascent RNA transcript via endonuclease activity. The integrator complex is also involved in the 3'-end processing of the U7 snRNA, and also the spliceosomal snRNAs U1, U2, U4 and U5. Within the integrator complex, INTS8 is required for the recruitment of protein phosphatase 2A (PP2A) to transcription pause-release checkpoint. This Drosophila melanogaster (Fruit fly) protein is Integrator complex subunit 8.